The following is a 206-amino-acid chain: Small ribosomal subunit protein uS4 (206 aa).

One can recognise an S4 RNA-binding domain in the interval 96-156; sequence CRLDNVVYRM…EKAKNQLRIV (61 aa).

Belongs to the universal ribosomal protein uS4 family. As to quaternary structure, part of the 30S ribosomal subunit. Contacts protein S5. The interaction surface between S4 and S5 is involved in control of translational fidelity.

In terms of biological role, one of the primary rRNA binding proteins, it binds directly to 16S rRNA where it nucleates assembly of the body of the 30S subunit. Its function is as follows. With S5 and S12 plays an important role in translational accuracy. The sequence is that of Small ribosomal subunit protein uS4 from Pseudomonas fluorescens (strain SBW25).